Reading from the N-terminus, the 657-residue chain is Tetracycline resistance protein TetQ (657 aa).

The tr-type G domain occupies 17 to 260 (MNIINLGILA…AISSFILPPE (244 aa)). GTP contacts are provided by residues 26–33 (AHIDAGKT), 90–94 (DTPGH), and 144–147 (NKID).

This sequence belongs to the TRAFAC class translation factor GTPase superfamily. Classic translation factor GTPase family. TetM/TetO subfamily.

In terms of biological role, abolishes the inhibitory effect of tetracycline on protein synthesis by non-covalently modifying ribosomes. Confers mild resistance to tetracycline when expressed in E.coli. The polypeptide is Tetracycline resistance protein TetQ (tetQ) (Bacteroides fragilis).